The primary structure comprises 282 residues: 4-diphosphocytidyl-2-C-methyl-D-erythritol kinase (282 aa).

Lysine 8 is a catalytic residue. 91–101 (PVAAGLAGGST) serves as a coordination point for ATP. Residue aspartate 133 is part of the active site.

The protein belongs to the GHMP kinase family. IspE subfamily.

The catalysed reaction is 4-CDP-2-C-methyl-D-erythritol + ATP = 4-CDP-2-C-methyl-D-erythritol 2-phosphate + ADP + H(+). The protein operates within isoprenoid biosynthesis; isopentenyl diphosphate biosynthesis via DXP pathway; isopentenyl diphosphate from 1-deoxy-D-xylulose 5-phosphate: step 3/6. Catalyzes the phosphorylation of the position 2 hydroxy group of 4-diphosphocytidyl-2C-methyl-D-erythritol. This Symbiobacterium thermophilum (strain DSM 24528 / JCM 14929 / IAM 14863 / T) protein is 4-diphosphocytidyl-2-C-methyl-D-erythritol kinase.